We begin with the raw amino-acid sequence, 191 residues long: Octanoyltransferase (191 aa).

A BPL/LPL catalytic domain is found at 10-185; it reads ENSHDEIWLV…NILALLNNPP (176 aa). Substrate-binding positions include 49-56, 116-118, and 129-131; these read RGGQVTYH, SLG, and GLA. The Acyl-thioester intermediate role is filled by Cys147.

It belongs to the LipB family.

Its subcellular location is the cytoplasm. The enzyme catalyses octanoyl-[ACP] + L-lysyl-[protein] = N(6)-octanoyl-L-lysyl-[protein] + holo-[ACP] + H(+). Its pathway is protein modification; protein lipoylation via endogenous pathway; protein N(6)-(lipoyl)lysine from octanoyl-[acyl-carrier-protein]: step 1/2. In terms of biological role, catalyzes the transfer of endogenously produced octanoic acid from octanoyl-acyl-carrier-protein onto the lipoyl domains of lipoate-dependent enzymes. Lipoyl-ACP can also act as a substrate although octanoyl-ACP is likely to be the physiological substrate. The protein is Octanoyltransferase of Salmonella choleraesuis (strain SC-B67).